The chain runs to 243 residues: ATP synthase subunit a, chloroplastic (243 aa).

5 consecutive transmembrane segments (helical) span residues 32–52, 91–111, 130–150, 195–215, and 216–236; these read AQVL…ALIA, IPFV…GALI, INTT…AGLN, LVVA…MMFL, and GLFT…AYIG.

It belongs to the ATPase A chain family. As to quaternary structure, F-type ATPases have 2 components, CF(1) - the catalytic core - and CF(0) - the membrane proton channel. CF(1) has five subunits: alpha(3), beta(3), gamma(1), delta(1), epsilon(1). CF(0) has four main subunits: a, b, b' and c.

It localises to the plastid. The protein localises to the chloroplast thylakoid membrane. Functionally, key component of the proton channel; it plays a direct role in the translocation of protons across the membrane. This chain is ATP synthase subunit a, chloroplastic, found in Chaetosphaeridium globosum (Charophycean green alga).